The chain runs to 306 residues: Follistatin-related protein 1 (306 aa).

A signal peptide spans 1 to 18 (MWKRWLALALVAVAWVRA). The 24-residue stretch at 28 to 51 (ICANVFCGAGRECAVTEKGEPTCL) folds into the Follistatin-like domain. Disulfide bonds link C29-C40, C34-C50, C52-C82, C56-C75, and C64-C96. A Kazal-like domain is found at 46–98 (GEPTCLCIEQCKPHKRPVCGSNGKTYLNHCELHRDACLTGSKIQVDYDGHCKE). N142 is a glycosylation site (N-linked (GlcNAc...) asparagine). In terms of domain architecture, EF-hand 1 spans 142 to 176 (NYSEILDKYFKNFDNGDSRLDSSEFLKFVEQNETA). S163 carries the phosphoserine modification. N173 and N178 each carry an N-linked (GlcNAc...) asparagine glycan. An EF-hand 2 domain is found at 191–226 (LRGLCVDALIELSDENADWKLSFQEFLKCLNPSFNP). Residues 231–285 (CALEDETYADGAETEVDCNRCVCACGNWVCTAMTCDGKNQKGAQTQTEEEMTRYV) enclose the VWFC domain.

Homodimer. Interacts with SCN10A. Interacts with DIP2A; DIP2A may act as a cell surface receptor for FSTL1. Interacts with BMP4. Interacts with CD14; this interaction promotes TL4-mediated signaling cascade.

The protein localises to the secreted. Secreted glycoprotein that is involved in various physiological processes, such as angiogenesis, regulation of the immune response, cell proliferation and differentiation. Plays a role in the development of the central nervous system, skeletal system, lungs, and ureter. Promotes endothelial cell survival, migration and differentiation into network structures in an AKT-dependent manner. Also promotes survival of cardiac myocytes. Initiates various signaling cascades by activating different receptors on the cell surface such as DIP2A, TLR4 or BMP receptors. The polypeptide is Follistatin-related protein 1 (FSTL1) (Pongo abelii (Sumatran orangutan)).